The sequence spans 313 residues: Dihydroorotate dehydrogenase B (NAD(+)), catalytic subunit (313 aa).

FMN is bound by residues Ser-21 and 45 to 46; that span reads KA. Substrate is bound by residues Lys-45 and 69–73; that span reads NAIGL. Positions 99 and 127 each coordinate FMN. Asn-127 contacts substrate. Catalysis depends on Cys-130, which acts as the Nucleophile. Position 191 (Ile-191) interacts with FMN. 192 to 193 provides a ligand contact to substrate; the sequence is NT. FMN contacts are provided by residues Gly-217, 243-244, and 265-266; these read GG and GT.

Belongs to the dihydroorotate dehydrogenase family. Type 1 subfamily. As to quaternary structure, heterotetramer of 2 PyrK and 2 PyrD type B subunits. Requires FMN as cofactor.

The protein resides in the cytoplasm. The catalysed reaction is (S)-dihydroorotate + NAD(+) = orotate + NADH + H(+). It participates in pyrimidine metabolism; UMP biosynthesis via de novo pathway; orotate from (S)-dihydroorotate (NAD(+) route): step 1/1. Its function is as follows. Catalyzes the conversion of dihydroorotate to orotate with NAD(+) as electron acceptor. In Bacillus caldolyticus, this protein is Dihydroorotate dehydrogenase B (NAD(+)), catalytic subunit (pyrD).